Here is a 430-residue protein sequence, read N- to C-terminus: NEDD8-activating enzyme E1 catalytic subunit (430 aa).

Residue 52 to 76 (GLGCELLKNLALSGFRTIEVIDMDT) coordinates ATP. The active-site Glycyl thioester intermediate is the C211.

Belongs to the ubiquitin-activating E1 family. UBA3 subfamily. As to quaternary structure, heterodimer of uba-3 and ula-1. Interacts with NEDD8 and ubc-12. Expressed in intestine, vulva epithelium and head and tail neurons.

It is found in the nucleus. The protein localises to the cytoplasm. The enzyme catalyses ATP + [NEDD8 protein] + [E1 NEDD8-activating enzyme]-L-cysteine = AMP + diphosphate + [E1 NEDD8-activating enzyme]-S-[NEDD8 protein]-yl-L-cysteine.. It participates in protein modification; protein neddylation. Functionally, catalytic subunit of the dimeric rfl-1 (uba-3)-ula-1 E1 enzyme. E1 activates NEDD8 by first adenylating its C-terminal glycine residue with ATP, thereafter linking this residue to the side chain of the catalytic cysteine, yielding a NEDD8-uba-3 thioester and free AMP. E1 finally transfers NEDD8 to the catalytic cysteine of ubc-12. Required for cytokinesis and mitotic spindle orientation during early embryogenesis. The sequence is that of NEDD8-activating enzyme E1 catalytic subunit from Caenorhabditis elegans.